A 376-amino-acid chain; its full sequence is Queuine tRNA-ribosyltransferase (376 aa).

The active-site Proton acceptor is the D89. Substrate is bound by residues 89-93, D143, Q194, and G221; that span reads DSGGF. Positions 252 to 258 are RNA binding; it reads GVGIPSN. The active-site Nucleophile is D271. The interval 276–280 is RNA binding; important for wobble base 34 recognition; the sequence is ARNGR. Positions 309, 311, 314, and 340 each coordinate Zn(2+).

The protein belongs to the queuine tRNA-ribosyltransferase family. Homodimer. Within each dimer, one monomer is responsible for RNA recognition and catalysis, while the other monomer binds to the replacement base PreQ1. It depends on Zn(2+) as a cofactor.

The catalysed reaction is 7-aminomethyl-7-carbaguanine + guanosine(34) in tRNA = 7-aminomethyl-7-carbaguanosine(34) in tRNA + guanine. Its pathway is tRNA modification; tRNA-queuosine biosynthesis. Its function is as follows. Catalyzes the base-exchange of a guanine (G) residue with the queuine precursor 7-aminomethyl-7-deazaguanine (PreQ1) at position 34 (anticodon wobble position) in tRNAs with GU(N) anticodons (tRNA-Asp, -Asn, -His and -Tyr). Catalysis occurs through a double-displacement mechanism. The nucleophile active site attacks the C1' of nucleotide 34 to detach the guanine base from the RNA, forming a covalent enzyme-RNA intermediate. The proton acceptor active site deprotonates the incoming PreQ1, allowing a nucleophilic attack on the C1' of the ribose to form the product. After dissociation, two additional enzymatic reactions on the tRNA convert PreQ1 to queuine (Q), resulting in the hypermodified nucleoside queuosine (7-(((4,5-cis-dihydroxy-2-cyclopenten-1-yl)amino)methyl)-7-deazaguanosine). The sequence is that of Queuine tRNA-ribosyltransferase from Clostridium botulinum (strain Hall / ATCC 3502 / NCTC 13319 / Type A).